Here is a 123-residue protein sequence, read N- to C-terminus: Holo-[acyl-carrier-protein] synthase (123 aa).

Asp8 and Glu56 together coordinate Mg(2+).

This sequence belongs to the P-Pant transferase superfamily. AcpS family. Requires Mg(2+) as cofactor.

The protein resides in the cytoplasm. The catalysed reaction is apo-[ACP] + CoA = holo-[ACP] + adenosine 3',5'-bisphosphate + H(+). Its function is as follows. Transfers the 4'-phosphopantetheine moiety from coenzyme A to a Ser of acyl-carrier-protein. The protein is Holo-[acyl-carrier-protein] synthase of Clostridium botulinum (strain Eklund 17B / Type B).